We begin with the raw amino-acid sequence, 185 residues long: AP-3 complex subunit sigma (185 aa).

Belongs to the adaptor complexes small subunit family. As to quaternary structure, adaptor protein complex 3 (AP-3) is a heterotetramer composed of 2 large adaptins (APL5 and APL6), a medium adaptin (APM3) and a small adaptin (APS3).

It localises to the golgi apparatus. Its subcellular location is the cytoplasmic vesicle membrane. Its function is as follows. Part of the AP-3 complex, an adaptor-related complex which is not clathrin-associated. The complex is associated with the Golgi region as well as more peripheral structures. It facilitates the budding of vesicles from the Golgi membrane and may be directly involved in trafficking to the vacuole. The chain is AP-3 complex subunit sigma (APS3) from Eremothecium gossypii (strain ATCC 10895 / CBS 109.51 / FGSC 9923 / NRRL Y-1056) (Yeast).